Reading from the N-terminus, the 215-residue chain is Adenylate kinase (215 aa).

10 to 15 (GAGKGT) provides a ligand contact to ATP. Residues 30 to 59 (STGDMLRAAVKAGSPLGQQVKGVMDSGGLV) are NMP. AMP is bound by residues T31, R36, 57–59 (GLV), 85–88 (GFPR), and Q92. Positions 122–159 (GRRVHPASGRVYHTEHNPPKVAGKDDVTGEDLIQREDD) are LID. ATP contacts are provided by residues R123 and 132–133 (VY). AMP is bound by residues R156 and R167. An ATP-binding site is contributed by G201.

It belongs to the adenylate kinase family. As to quaternary structure, monomer.

Its subcellular location is the cytoplasm. It carries out the reaction AMP + ATP = 2 ADP. It functions in the pathway purine metabolism; AMP biosynthesis via salvage pathway; AMP from ADP: step 1/1. Functionally, catalyzes the reversible transfer of the terminal phosphate group between ATP and AMP. Plays an important role in cellular energy homeostasis and in adenine nucleotide metabolism. This Pseudomonas paraeruginosa (strain DSM 24068 / PA7) (Pseudomonas aeruginosa (strain PA7)) protein is Adenylate kinase.